The primary structure comprises 246 residues: Probable phosphatase Ssed_2939 (246 aa).

The Zn(2+) site is built by His-8, His-10, His-16, His-41, Glu-74, His-102, His-132, Asp-193, and His-195.

Belongs to the PHP family. The cofactor is Zn(2+).

The chain is Probable phosphatase Ssed_2939 from Shewanella sediminis (strain HAW-EB3).